The chain runs to 267 residues: tRNA (guanine-N(1)-)-methyltransferase (267 aa).

Residues glycine 112 and 131–136 (IGDYIL) contribute to the S-adenosyl-L-methionine site. Residues 245–259 (DRRKEKNSYEDEFNR) are compositionally biased toward basic and acidic residues. A disordered region spans residues 245–267 (DRRKEKNSYEDEFNRRNYKRSTS).

This sequence belongs to the RNA methyltransferase TrmD family. In terms of assembly, homodimer.

It localises to the cytoplasm. The enzyme catalyses guanosine(37) in tRNA + S-adenosyl-L-methionine = N(1)-methylguanosine(37) in tRNA + S-adenosyl-L-homocysteine + H(+). In terms of biological role, specifically methylates guanosine-37 in various tRNAs. In Spiroplasma kunkelii, this protein is tRNA (guanine-N(1)-)-methyltransferase.